Consider the following 564-residue polypeptide: Beta-hexosaminidase subunit B2 (564 aa).

Residues 1-19 form the signal peptide; sequence MKLKFIFLILFFIIGNSIG. 4 N-linked (GlcNAc...) asparagine glycosylation sites follow: Asn-43, Asn-84, Asn-303, and Asn-347. Glu-357 functions as the Proton donor in the catalytic mechanism. N-linked (GlcNAc...) asparagine glycans are attached at residues Asn-364, Asn-377, Asn-439, Asn-524, and Asn-551.

This sequence belongs to the glycosyl hydrolase 20 family.

It localises to the lysosome. It catalyses the reaction Hydrolysis of terminal non-reducing N-acetyl-D-hexosamine residues in N-acetyl-beta-D-hexosaminides.. In terms of biological role, responsible for the degradation of GM2 gangliosides, and a variety of other molecules containing terminal N-acetyl hexosamines. The polypeptide is Beta-hexosaminidase subunit B2 (hexb2) (Dictyostelium discoideum (Social amoeba)).